Consider the following 1392-residue polypeptide: DNA-directed RNA polymerase subunit beta (1392 aa).

The protein belongs to the RNA polymerase beta chain family. As to quaternary structure, the RNAP catalytic core consists of 2 alpha, 1 beta, 1 beta' and 1 omega subunit. When a sigma factor is associated with the core the holoenzyme is formed, which can initiate transcription.

It catalyses the reaction RNA(n) + a ribonucleoside 5'-triphosphate = RNA(n+1) + diphosphate. In terms of biological role, DNA-dependent RNA polymerase catalyzes the transcription of DNA into RNA using the four ribonucleoside triphosphates as substrates. This chain is DNA-directed RNA polymerase subunit beta, found in Neisseria gonorrhoeae (strain ATCC 700825 / FA 1090).